We begin with the raw amino-acid sequence, 262 residues long: tRNA (guanine-N(1)-)-methyltransferase (262 aa).

S-adenosyl-L-methionine contacts are provided by residues Gly-111 and 130–135 (LGDFVL).

Belongs to the RNA methyltransferase TrmD family. Homodimer.

The protein localises to the cytoplasm. The catalysed reaction is guanosine(37) in tRNA + S-adenosyl-L-methionine = N(1)-methylguanosine(37) in tRNA + S-adenosyl-L-homocysteine + H(+). Functionally, specifically methylates guanosine-37 in various tRNAs. The polypeptide is tRNA (guanine-N(1)-)-methyltransferase (Desulfitobacterium hafniense (strain Y51)).